Reading from the N-terminus, the 187-residue chain is Benzene 1,2-dioxygenase subunit beta (187 aa).

This sequence belongs to the bacterial ring-hydroxylating dioxygenase beta subunit family. As to quaternary structure, this dioxygenase system consists of four proteins: the two subunits of the hydroxylase component (BedC1 and BedC2), a ferredoxin (BedB) and a ferredoxin reductase (BedA).

It carries out the reaction benzene + NADH + O2 + H(+) = cis-1,2-dihydrobenzene-1,2-diol + NAD(+). The protein operates within aromatic compound metabolism; benzene degradation; catechol from benzene: step 1/2. Its function is as follows. The beta subunit may be responsible for the substrate specificity of the enzyme. This Pseudomonas putida (Arthrobacter siderocapsulatus) protein is Benzene 1,2-dioxygenase subunit beta (bedC2).